Here is a 135-residue protein sequence, read N- to C-terminus: UPF0299 membrane protein Spro_1570 (135 aa).

A run of 4 helical transmembrane segments spans residues L4–A24, A30–L50, G63–M83, and L93–Y113.

Belongs to the UPF0299 family.

The protein localises to the cell inner membrane. The protein is UPF0299 membrane protein Spro_1570 of Serratia proteamaculans (strain 568).